We begin with the raw amino-acid sequence, 298 residues long: Protoheme IX farnesyltransferase (298 aa).

A run of 9 helical transmembrane segments spans residues 26 to 46, 52 to 72, 93 to 113, 120 to 140, 148 to 168, 174 to 194, 219 to 239, 241 to 261, and 278 to 298; these read VVSLIVFTAVIGMFLSVPGAV, IFGTVGISLVAGAAAALNCLV, VSVPETLFFLVLIGGFGLFML, LTMWLTLGTFVGYAIIYTVIL, IVIGGASGAMPPVLGWAAVTG, ALLLFLIIFAWTPPHFWALAL, LHVLLYTIILCVVTVLPYLTQ, SGLIYLGSVLILDAIFFYYAI, and YSIAYLALLFTALLVDHYFYF.

It belongs to the UbiA prenyltransferase family. Protoheme IX farnesyltransferase subfamily.

The protein localises to the cell inner membrane. The catalysed reaction is heme b + (2E,6E)-farnesyl diphosphate + H2O = Fe(II)-heme o + diphosphate. It functions in the pathway porphyrin-containing compound metabolism; heme O biosynthesis; heme O from protoheme: step 1/1. Its function is as follows. Converts heme B (protoheme IX) to heme O by substitution of the vinyl group on carbon 2 of heme B porphyrin ring with a hydroxyethyl farnesyl side group. This is Protoheme IX farnesyltransferase from Nitrosomonas europaea (strain ATCC 19718 / CIP 103999 / KCTC 2705 / NBRC 14298).